The following is a 614-amino-acid chain: MDRKVTVHEDGCPVVSWVPEEGEMMDQKDKDQVKDRGQWTNKMEFVLSVAGEIIGLGNVWRFPYLCYKNGGGAFFIPYFIFFFSCGIPVFFLEVALGQYSSQGSVTAWRKICPLLQGIGMASVVIESYLNIYYIIILAWALFYLFSSFTWELPWTTCTNSWNTEHCVDFLNYSSTRAASYSENFTSPVMEFWERRVLGITSGIHDLGSLRWELALCLLLAWIICYFCIWKGVKSTGKVVYFTATFPYLMLIILLIRGVTLPGAYQGIVFYLKPDLLRLKDPQVWMDAGTQIFFSFAICQGCLTALGSYNKYHNNCYRDSIALCFLNSATSFVAGFVVFSILGFMAQEQGVPISEVAESGPGLAFIAFPKAVTMMPLSQLWSCLFFLMLLFLGLDSQFVCMECLVTASMDMFPQQLRKRGRRELLILAVAIVCYLMGLLLVTEGGMYIFQLFDYYASSGICLLFLSLFEVICIGWVYGADRFYDNVEDMIGYRPWPLVKISWLFLTPGLCLATFFFSLSKYTPLKYNNVYIYPSWGYSIGWLLAFSSMACVPLFIIITLLKTQGSFKKRLQRLITPDPSLPQPGRRSPQDGSSAQNCSTSPVKQELIAWEKETHL.

The Cytoplasmic portion of the chain corresponds to methionine 1–glutamate 44. A run of 3 helical transmembrane segments spans residues phenylalanine 45–leucine 65, alanine 73–leucine 92, and glycine 117–leucine 137. The Extracellular segment spans residues alanine 138 to arginine 210. 2 N-linked (GlcNAc...) asparagine glycosylation sites follow: asparagine 171 and asparagine 183. A run of 9 helical transmembrane segments spans residues tryptophan 211–tryptophan 229, valine 238–isoleucine 255, isoleucine 291–tyrosine 308, isoleucine 320–leucine 341, methionine 374–leucine 393, leucine 423–threonine 441, glycine 458–alanine 478, isoleucine 499–serine 518, and isoleucine 538–isoleucine 556. Topologically, residues threonine 557–leucine 614 are cytoplasmic. The tract at residues threonine 574–proline 600 is disordered. The residue at position 586 (serine 586) is a Phosphoserine. Residues glutamine 588–proline 600 are compositionally biased toward polar residues.

Belongs to the sodium:neurotransmitter symporter (SNF) (TC 2.A.22) family. SLC6A12 subfamily. In terms of assembly, interacts with LIN7C.

It localises to the basolateral cell membrane. It is found in the cell membrane. The enzyme catalyses 4-aminobutanoate(out) + chloride(out) + 3 Na(+)(out) = 4-aminobutanoate(in) + chloride(in) + 3 Na(+)(in). The catalysed reaction is glycine betaine(out) + 2 chloride(out) + 3 Na(+)(out) = glycine betaine(in) + 2 chloride(in) + 3 Na(+)(in). In terms of biological role, transporter that mediates cellular uptake of betaine and GABA in a sodium- and chloride-dependent process. May have a role in regulation of GABAergic transmission in the brain through the reuptake of GABA into presynaptic terminals, as well as in osmotic regulation. Probably also involved in renal and hepatic osmotic regulation. The chain is Sodium- and chloride-dependent betaine transporter (Slc6a12) from Rattus norvegicus (Rat).